Consider the following 98-residue polypeptide: Large ribosomal subunit protein bL27 (98 aa).

The segment covering 1–11 has biased composition (polar residues); it reads MASKASGGSTR. The disordered stretch occupies residues 1 to 20; it reads MASKASGGSTRNGRDSISKR.

It belongs to the bacterial ribosomal protein bL27 family.

The polypeptide is Large ribosomal subunit protein bL27 (Aquifex aeolicus (strain VF5)).